The sequence spans 290 residues: 4-hydroxy-tetrahydrodipicolinate synthase (290 aa).

Thr-44 contacts pyruvate. Tyr-132 functions as the Proton donor/acceptor in the catalytic mechanism. Catalysis depends on Lys-160, which acts as the Schiff-base intermediate with substrate. Residue Ile-202 coordinates pyruvate.

The protein belongs to the DapA family. In terms of assembly, homotetramer; dimer of dimers.

Its subcellular location is the cytoplasm. The enzyme catalyses L-aspartate 4-semialdehyde + pyruvate = (2S,4S)-4-hydroxy-2,3,4,5-tetrahydrodipicolinate + H2O + H(+). It functions in the pathway amino-acid biosynthesis; L-lysine biosynthesis via DAP pathway; (S)-tetrahydrodipicolinate from L-aspartate: step 3/4. Catalyzes the condensation of (S)-aspartate-beta-semialdehyde [(S)-ASA] and pyruvate to 4-hydroxy-tetrahydrodipicolinate (HTPA). The polypeptide is 4-hydroxy-tetrahydrodipicolinate synthase (Ruegeria pomeroyi (strain ATCC 700808 / DSM 15171 / DSS-3) (Silicibacter pomeroyi)).